We begin with the raw amino-acid sequence, 399 residues long: Elongation factor Tu (399 aa).

The region spanning 10–209 (KPHVNIGTIG…EVDRYIPTPE (200 aa)) is the tr-type G domain. The G1 stretch occupies residues 19 to 26 (GHVDHGKT). 19 to 26 (GHVDHGKT) is a GTP binding site. Threonine 26 contributes to the Mg(2+) binding site. The tract at residues 60–64 (GITIA) is G2. Positions 81 to 84 (DCPG) are G3. Residues 81-85 (DCPGH) and 136-139 (NKED) contribute to the GTP site. Residues 136-139 (NKED) are G4. Positions 174 to 176 (SAL) are G5.

Belongs to the TRAFAC class translation factor GTPase superfamily. Classic translation factor GTPase family. EF-Tu/EF-1A subfamily. As to quaternary structure, monomer.

The protein localises to the cytoplasm. The catalysed reaction is GTP + H2O = GDP + phosphate + H(+). GTP hydrolase that promotes the GTP-dependent binding of aminoacyl-tRNA to the A-site of ribosomes during protein biosynthesis. The sequence is that of Elongation factor Tu from Wolinella succinogenes (strain ATCC 29543 / DSM 1740 / CCUG 13145 / JCM 31913 / LMG 7466 / NCTC 11488 / FDC 602W) (Vibrio succinogenes).